The primary structure comprises 421 residues: UDP-N-acetylglucosamine 1-carboxyvinyltransferase (421 aa).

24–25 (KN) serves as a coordination point for phosphoenolpyruvate. Arg-93 contributes to the UDP-N-acetyl-alpha-D-glucosamine binding site. The Proton donor role is filled by Cys-117. The residue at position 117 (Cys-117) is a 2-(S-cysteinyl)pyruvic acid O-phosphothioketal. The UDP-N-acetyl-alpha-D-glucosamine site is built by Asp-307 and Ile-329.

The protein belongs to the EPSP synthase family. MurA subfamily.

The protein localises to the cytoplasm. The catalysed reaction is phosphoenolpyruvate + UDP-N-acetyl-alpha-D-glucosamine = UDP-N-acetyl-3-O-(1-carboxyvinyl)-alpha-D-glucosamine + phosphate. Its pathway is cell wall biogenesis; peptidoglycan biosynthesis. Cell wall formation. Adds enolpyruvyl to UDP-N-acetylglucosamine. The polypeptide is UDP-N-acetylglucosamine 1-carboxyvinyltransferase (Blochmanniella pennsylvanica (strain BPEN)).